Consider the following 243-residue polypeptide: Segregation and condensation protein A (243 aa).

Belongs to the ScpA family. As to quaternary structure, component of a cohesin-like complex composed of ScpA, ScpB and the Smc homodimer, in which ScpA and ScpB bind to the head domain of Smc. The presence of the three proteins is required for the association of the complex with DNA.

It localises to the cytoplasm. Functionally, participates in chromosomal partition during cell division. May act via the formation of a condensin-like complex containing Smc and ScpB that pull DNA away from mid-cell into both cell halves. The sequence is that of Segregation and condensation protein A from Staphylococcus haemolyticus (strain JCSC1435).